A 440-amino-acid chain; its full sequence is Probable cytosolic iron-sulfur protein assembly protein 1 (440 aa).

WD repeat units lie at residues 12-51 (AHAEPAWTVSFNPTRSLLASCSTDRTIRLYSYIIPSSSDG), 71-110 (DHKRTVRSIAWSPDGRTLASGSFDSTVGVWEEVIPLSDDE), 148-187 (GHESECKSVGFSSDGALLASCSRDKSVWVWEVQPDADFEC), 193-233 (EHSQ…WCIF), 278-317 (EEDETVWCLAWSPDGRWLASGGDNGGIRLWQRTGSQPDSA), 326-379 (AHSR…SPSS), and 401-440 (HGVNDINSVAWCVREDKKGWGMLSSAGDDGSVKVWRVVRD). Residues 107–116 (SDDEEEEDEG) show a composition bias toward acidic residues. The disordered stretch occupies residues 107–137 (SDDEEEEDEGAQGVYKPAGVDSDGDGDGGKE).

This sequence belongs to the WD repeat CIA1 family.

Essential component of the cytosolic iron-sulfur (Fe/S) protein assembly machinery. Required for the maturation of extramitochondrial Fe/S proteins. This is Probable cytosolic iron-sulfur protein assembly protein 1 from Cryptococcus neoformans var. neoformans serotype D (strain B-3501A) (Filobasidiella neoformans).